The sequence spans 573 residues: Urease subunit alpha (573 aa).

Ni(2+) is bound by residues His139, His141, and Lys222. At Lys222 the chain carries N6-carboxylysine. His224 is a binding site for substrate. Ni(2+) is bound by residues His251 and His277. Catalysis depends on His325, which acts as the Proton donor. A Ni(2+)-binding site is contributed by Asp365.

It belongs to the metallo-dependent hydrolases superfamily. Urease alpha subunit family. Heterotrimer of UreA (gamma), UreB (beta) and UreC (alpha) subunits. Three heterotrimers associate to form the active enzyme. Requires Ni cation as cofactor. Post-translationally, carboxylation allows a single lysine to coordinate two nickel ions.

The protein resides in the cytoplasm. It carries out the reaction urea + 2 H2O + H(+) = hydrogencarbonate + 2 NH4(+). Its pathway is nitrogen metabolism; urea degradation; CO(2) and NH(3) from urea (urease route): step 1/1. This Flavobacterium johnsoniae (strain ATCC 17061 / DSM 2064 / JCM 8514 / BCRC 14874 / CCUG 350202 / NBRC 14942 / NCIMB 11054 / UW101) (Cytophaga johnsonae) protein is Urease subunit alpha.